We begin with the raw amino-acid sequence, 307 residues long: MTSLDDTIISYQNIMLLDNMTNYNKPAIDYFHHEFNDASLEISASWTLLLKMRKHKLLRLPSCSSEDVLDYNMYLVRLHHCLWRRWSINHYGLQNSKSNPLSINWNKETDVTVLYGPDLTNIDSNENEISPVQNQIDQKQTKNLKSALKKNTECWVTEEVDEINASIESNDNALVKLEDISCPSSVDSHTSSIFDQHSTCTKISSIDEDSEDLMNEKKEQFPRKLKFNQAVMKREIDSKGTIRESLININDIQHSRHHRRHHRRHHHHHHQNSSHSDETIKEAHYEFSNYTFGTMEEDIFYRNQVVF.

Positions 254-278 are disordered; sequence HSRHHRRHHRRHHHHHHQNSSHSDE. Residues 255-272 show a composition bias toward basic residues; it reads SRHHRRHHRRHHHHHHQN.

The protein to yeast YOR062c.

This is an uncharacterized protein from Saccharomyces cerevisiae (strain ATCC 204508 / S288c) (Baker's yeast).